Here is a 309-residue protein sequence, read N- to C-terminus: Protein MAK16 homolog (309 aa).

Residues 194–309 form a disordered region; it reads EADQFSEEEA…IEEETENQAN (116 aa). Acidic residues-rich tracts occupy residues 195–227 and 235–270; these read ADQFSEEEADENEEEGEEEMEEEFEDDIDDIED and VEGDDDEDDIDDEYENEPYQDDDEEDDDDDDDDDEE. The span at 275-293 shows a compositional bias: basic residues; that stretch reads ITKKRGPTFKPTKKTPQKR. A compositionally biased stretch (acidic residues) spans 299–309; that stretch reads EIEEETENQAN.

Belongs to the MAK16 family.

The protein localises to the nucleus. It is found in the nucleolus. This chain is Protein MAK16 homolog (mak16l), found in Dictyostelium discoideum (Social amoeba).